Consider the following 214-residue polypeptide: Guanylate kinase (214 aa).

Residues 6 to 192 (GTLYIISAPS…ALEDLKSIFR (187 aa)) form the Guanylate kinase-like domain. 13-20 (APSGAGKT) lines the ATP pocket.

It belongs to the guanylate kinase family.

Its subcellular location is the cytoplasm. The enzyme catalyses GMP + ATP = GDP + ADP. Its function is as follows. Essential for recycling GMP and indirectly, cGMP. The chain is Guanylate kinase from Pseudomonas syringae pv. tomato (strain ATCC BAA-871 / DC3000).